The chain runs to 500 residues: NAD(P)H-quinone oxidoreductase chain 4, chloroplastic (500 aa).

Helical transmembrane passes span 4–24, 37–57, 87–107, 111–131, 134–154, 167–187, 208–228, 242–262, 272–292, 305–325, 330–350, 386–406, 416–436, and 462–482; these read FPWLTIIVVFPILTGSLIFLL, LCICILELLLTTYTFCYHFQL, IGPILLTGFITTLATLAAWPV, AQLFHFLMLAMYSGQIGSFSS, LLLFFLMWEFELIPVYLLLSM, FILYTAGGSIFLLIGVLGIGL, ALEVIFYVGFLIAFAVKLPII, HYSTCMLLAGILLKMGAYGLV, AHCLFSPGLIIVGAIQIIYAA, IAYSSISHMGFIIIGIGSLSD, GAILQIISHGFIGAALFFLAG, LALPGLSGFVAELLVFFGIIT, ILIAFLMAIGMILTPIYSLSM, and LFVSISLLLPIIGIGIYPDFV.

The protein belongs to the complex I subunit 4 family.

The protein localises to the plastid. It is found in the chloroplast thylakoid membrane. It catalyses the reaction a plastoquinone + NADH + (n+1) H(+)(in) = a plastoquinol + NAD(+) + n H(+)(out). The catalysed reaction is a plastoquinone + NADPH + (n+1) H(+)(in) = a plastoquinol + NADP(+) + n H(+)(out). The sequence is that of NAD(P)H-quinone oxidoreductase chain 4, chloroplastic from Oenothera biennis (German evening primrose).